Consider the following 321-residue polypeptide: Arabinan endo-1,5-alpha-L-arabinosidase A (321 aa).

The signal sequence occupies residues Met1–Gly19. Asp34 functions as the Proton acceptor in the catalytic mechanism. The Proton donor role is filled by Glu200. A glycan (N-linked (GlcNAc...) asparagine) is linked at Asn295.

It belongs to the glycosyl hydrolase 43 family.

The enzyme catalyses Endohydrolysis of (1-&gt;5)-alpha-arabinofuranosidic linkages in (1-&gt;5)-arabinans.. The protein operates within glycan metabolism; L-arabinan degradation. Functionally, its preferred substrate is linear 1,5-alpha-L-arabinan. The enzyme activity is progressively reduced as 1,5-alpha-chains become shorter or more highly substituted. The polypeptide is Arabinan endo-1,5-alpha-L-arabinosidase A (abnA) (Aspergillus niger).